The chain runs to 276 residues: Diaminopimelate epimerase (276 aa).

Substrate-binding residues include N13, Q46, and N66. The active-site Proton donor is the C75. Residues 76–77, N159, N192, and 210–211 contribute to the substrate site; these read GN and ER. C219 functions as the Proton acceptor in the catalytic mechanism. Position 220 to 221 (220 to 221) interacts with substrate; sequence GT.

Belongs to the diaminopimelate epimerase family. In terms of assembly, homodimer.

The protein localises to the cytoplasm. It carries out the reaction (2S,6S)-2,6-diaminopimelate = meso-2,6-diaminopimelate. It functions in the pathway amino-acid biosynthesis; L-lysine biosynthesis via DAP pathway; DL-2,6-diaminopimelate from LL-2,6-diaminopimelate: step 1/1. Its function is as follows. Catalyzes the stereoinversion of LL-2,6-diaminopimelate (L,L-DAP) to meso-diaminopimelate (meso-DAP), a precursor of L-lysine and an essential component of the bacterial peptidoglycan. This is Diaminopimelate epimerase from Pseudomonas fluorescens.